The following is a 311-amino-acid chain: Methionyl-tRNA formyltransferase (311 aa).

110 to 113 (SLLP) is a (6S)-5,6,7,8-tetrahydrofolate binding site.

This sequence belongs to the Fmt family.

The enzyme catalyses L-methionyl-tRNA(fMet) + (6R)-10-formyltetrahydrofolate = N-formyl-L-methionyl-tRNA(fMet) + (6S)-5,6,7,8-tetrahydrofolate + H(+). In terms of biological role, attaches a formyl group to the free amino group of methionyl-tRNA(fMet). The formyl group appears to play a dual role in the initiator identity of N-formylmethionyl-tRNA by promoting its recognition by IF2 and preventing the misappropriation of this tRNA by the elongation apparatus. The chain is Methionyl-tRNA formyltransferase from Streptococcus thermophilus (strain ATCC BAA-250 / LMG 18311).